We begin with the raw amino-acid sequence, 425 residues long: Dihydroorotase (425 aa).

The Zn(2+) site is built by His-61 and His-63. Substrate is bound by residues His-63–Arg-65 and Asn-95. Zn(2+) is bound by residues Asp-153, His-180, and His-233. Asn-279 provides a ligand contact to substrate. Zn(2+) is bound at residue Asp-306. Asp-306 is a catalytic residue. Residue His-310 coordinates substrate.

The protein belongs to the metallo-dependent hydrolases superfamily. DHOase family. Class I DHOase subfamily. Requires Zn(2+) as cofactor.

The enzyme catalyses (S)-dihydroorotate + H2O = N-carbamoyl-L-aspartate + H(+). It functions in the pathway pyrimidine metabolism; UMP biosynthesis via de novo pathway; (S)-dihydroorotate from bicarbonate: step 3/3. Catalyzes the reversible cyclization of carbamoyl aspartate to dihydroorotate. The protein is Dihydroorotase of Geotalea daltonii (strain DSM 22248 / JCM 15807 / FRC-32) (Geobacter daltonii).